The sequence spans 168 residues: MSRWRPPAEKSTALITPEGHARLKAELDDLWRVRRPEVVRALAAAAAEGDRSENAEYTYRKKQLGEIDRRVRYLSKRLEALRVVDTAPTDANAVFFGAQVELEDAGSGELLRYRIVGPDETDAGRGWISIDSPLARALLKKRVDDEFDAHLPAGKHTFVVVSVDYASL.

It belongs to the GreA/GreB family. GreB subfamily.

In terms of biological role, necessary for efficient RNA polymerase transcription elongation past template-encoded arresting sites. The arresting sites in DNA have the property of trapping a certain fraction of elongating RNA polymerases that pass through, resulting in locked ternary complexes. Cleavage of the nascent transcript by cleavage factors such as GreA or GreB allows the resumption of elongation from the new 3'terminus. GreB releases sequences of up to 9 nucleotides in length. The polypeptide is Transcription elongation factor GreB (Xanthomonas axonopodis pv. citri (strain 306)).